Here is a 92-residue protein sequence, read N- to C-terminus: Small ribosomal subunit protein uS19c (92 aa).

It belongs to the universal ribosomal protein uS19 family.

It localises to the plastid. Its subcellular location is the chloroplast. In terms of biological role, protein S19 forms a complex with S13 that binds strongly to the 16S ribosomal RNA. The sequence is that of Small ribosomal subunit protein uS19c (rps19) from Anthoceros angustus (Hornwort).